Consider the following 281-residue polypeptide: Acidic leucine-rich nuclear phosphoprotein 32-related protein (281 aa).

4 LRR repeats span residues 29 to 52, 56 to 78, 79 to 103, and 105 to 128; these read YESL…EKEL, FKNL…IPSI, ATLN…IVQN, and PNIK…TLKE. Residues 140 to 178 enclose the LRRCT domain; sequence NPFADNPNYRKELFEFLPNVKIIDCYNKEGMEVLSSDEE. The segment covering 197–244 has biased composition (acidic residues); sequence FKDEDDEDEEFVPNDNEDDDEDDELDDDLEDEDMEDLDKEDLDKEDYD. The interval 197 to 281 is disordered; it reads FKDEDDEDEE…DMDLKKTKLE (85 aa). Positions 245–266 are enriched in basic and acidic residues; the sequence is IDTKETEGVNKDEKSNKRKQDA.

Belongs to the ANP32 family.

This Plasmodium falciparum (isolate 3D7) protein is Acidic leucine-rich nuclear phosphoprotein 32-related protein.